A 202-amino-acid chain; its full sequence is Glycoprotein U22 (202 aa).

The N-terminal stretch at 1–20 (MVPQGCSLVWVSALYVSVIA) is a signal peptide. N-linked (GlcNAc...) asparagine; by host glycosylation is found at Asn54, Asn107, Asn112, and Asn125. A helical transmembrane segment spans residues 172–192 (FVYYCISVYLFAVVVLCSCWF).

The protein resides in the membrane. The chain is Glycoprotein U22 (U22) from Homo sapiens (Human).